The following is a 166-amino-acid chain: Large ribosomal subunit protein uL10 (166 aa).

This sequence belongs to the universal ribosomal protein uL10 family. As to quaternary structure, part of the ribosomal stalk of the 50S ribosomal subunit. The N-terminus interacts with L11 and the large rRNA to form the base of the stalk. The C-terminus forms an elongated spine to which L12 dimers bind in a sequential fashion forming a multimeric L10(L12)X complex.

In terms of biological role, forms part of the ribosomal stalk, playing a central role in the interaction of the ribosome with GTP-bound translation factors. This Pseudomonas paraeruginosa (strain DSM 24068 / PA7) (Pseudomonas aeruginosa (strain PA7)) protein is Large ribosomal subunit protein uL10.